Reading from the N-terminus, the 245-residue chain is 1-(5-phosphoribosyl)-5-[(5-phosphoribosylamino)methylideneamino] imidazole-4-carboxamide isomerase (245 aa).

The active-site Proton acceptor is the Asp11. Asp132 functions as the Proton donor in the catalytic mechanism.

Belongs to the HisA/HisF family.

Its subcellular location is the cytoplasm. The catalysed reaction is 1-(5-phospho-beta-D-ribosyl)-5-[(5-phospho-beta-D-ribosylamino)methylideneamino]imidazole-4-carboxamide = 5-[(5-phospho-1-deoxy-D-ribulos-1-ylimino)methylamino]-1-(5-phospho-beta-D-ribosyl)imidazole-4-carboxamide. The protein operates within amino-acid biosynthesis; L-histidine biosynthesis; L-histidine from 5-phospho-alpha-D-ribose 1-diphosphate: step 4/9. This Bacillus licheniformis (strain ATCC 14580 / DSM 13 / JCM 2505 / CCUG 7422 / NBRC 12200 / NCIMB 9375 / NCTC 10341 / NRRL NRS-1264 / Gibson 46) protein is 1-(5-phosphoribosyl)-5-[(5-phosphoribosylamino)methylideneamino] imidazole-4-carboxamide isomerase.